The following is a 519-amino-acid chain: Xylose import ATP-binding protein XylG (519 aa).

ABC transporter domains lie at 6-245 and 262-507; these read LTMR…VGRE and LEAR…LTPA. An ATP-binding site is contributed by 38–45; sequence GENGAGKS.

The protein belongs to the ABC transporter superfamily. Xylose importer (TC 3.A.1.2.4) family. In terms of assembly, the complex is composed of two ATP-binding proteins (XylG), two transmembrane proteins (XylH) and a solute-binding protein (XylF).

It is found in the cell inner membrane. The enzyme catalyses D-xylose(out) + ATP + H2O = D-xylose(in) + ADP + phosphate + H(+). In terms of biological role, part of the ABC transporter complex XylFGH involved in xylose import. Responsible for energy coupling to the transport system. The sequence is that of Xylose import ATP-binding protein XylG from Burkholderia ambifaria (strain ATCC BAA-244 / DSM 16087 / CCUG 44356 / LMG 19182 / AMMD) (Burkholderia cepacia (strain AMMD)).